The sequence spans 407 residues: Accessory Sec system protein translocase subunit SecY2 (407 aa).

The next 10 membrane-spanning stretches (helical) occupy residues 13–33, 65–85, 104–124, 133–153, 158–178, 192–212, 248–268, 287–307, 345–365, and 370–390; these read FLWTLLFVFIYVLGSKLTLPF, FFSIGLAPWMSSILIWQMFTV, MLLTLAIALIQSLGLVLNLPL, GTIVFLDTLILIAGTYFLIWL, SSMGLGGSIMIVMVSMISYIP, PLILALIGFFSLCFLYLAVLV, IMYAMTLVSIPQYFLMLLLFF, IPWFILYLLTIFILAWAFAFI, FAFVGALYLVLVAGLPMLLIF, and YMRLGMIPGMFMIFIGMVFSI.

Belongs to the SecY/SEC61-alpha family. SecY2 subfamily. May form heterotrimers with SecE and SecG subunits (Potential). Component of the accessory SecA2/SecY2 protein translocase complex required to export cell wall protein GspB.

It is found in the cell membrane. Functionally, the central subunit of a protein translocation channel (Potential). Part of the accessory SecA2/SecY2 system specifically required to export GspB, a serine-rich repeat cell wall protein encoded upstream in the same operon. This chain is Accessory Sec system protein translocase subunit SecY2, found in Streptococcus gordonii.